Here is a 605-residue protein sequence, read N- to C-terminus: Probable potassium transport system protein Kup (605 aa).

Helical transmembrane passes span 18-38 (GLVFGDIGTSPIYTLTVIIAL), 46-66 (ILGIISLIVWTLIILVHLEYA), 97-117 (MAFVTFLTYLGVALLMGDGVI), 138-158 (GLSQNTLILIAGTIALFLFVF), 169-189 (AFGPIMVLWFAALALSGAISV), 204-224 (AISFLMHNGLPGFFVLSEVIL), 247-267 (AWYFVFVALVINYLGQGAFII), 287-307 (FYIPFLILTILATIIASQALI), 339-359 (IYIGSVNWLLLCLVILIMLVF), 368-388 (AYGFAVTGTMVITGIMMTMIF), 395-415 (WKVPLALFVTLVDVVFLVSNC), and 418-438 (LPHGGYWSLILASVPLAVILI).

Belongs to the HAK/KUP transporter (TC 2.A.72) family.

The protein resides in the cell inner membrane. It catalyses the reaction K(+)(in) + H(+)(in) = K(+)(out) + H(+)(out). In terms of biological role, transport of potassium into the cell. Likely operates as a K(+):H(+) symporter. In Pelobacter propionicus (strain DSM 2379 / NBRC 103807 / OttBd1), this protein is Probable potassium transport system protein Kup.